A 388-amino-acid chain; its full sequence is LL-diaminopimelate aminotransferase (388 aa).

Residues Y16 and G41 each contribute to the substrate site. Pyridoxal 5'-phosphate-binding positions include Y70, 104–105 (SK), Y129, N179, Y210, and 239–241 (SLS). Residues K105, Y129, and N179 each coordinate substrate. K242 carries the post-translational modification N6-(pyridoxal phosphate)lysine. R250 serves as a coordination point for pyridoxal 5'-phosphate. R368 contributes to the substrate binding site.

It belongs to the class-I pyridoxal-phosphate-dependent aminotransferase family. LL-diaminopimelate aminotransferase subfamily. As to quaternary structure, homodimer. Pyridoxal 5'-phosphate is required as a cofactor.

It catalyses the reaction (2S,6S)-2,6-diaminopimelate + 2-oxoglutarate = (S)-2,3,4,5-tetrahydrodipicolinate + L-glutamate + H2O + H(+). It functions in the pathway amino-acid biosynthesis; L-lysine biosynthesis via DAP pathway; LL-2,6-diaminopimelate from (S)-tetrahydrodipicolinate (aminotransferase route): step 1/1. Functionally, involved in the synthesis of meso-diaminopimelate (m-DAP or DL-DAP), required for both lysine and peptidoglycan biosynthesis. Catalyzes the direct conversion of tetrahydrodipicolinate to LL-diaminopimelate. This Nitratidesulfovibrio vulgaris (strain DP4) (Desulfovibrio vulgaris) protein is LL-diaminopimelate aminotransferase.